A 95-amino-acid chain; its full sequence is Small ribosomal subunit protein uS17 (95 aa).

Belongs to the universal ribosomal protein uS17 family. In terms of assembly, part of the 30S ribosomal subunit.

One of the primary rRNA binding proteins, it binds specifically to the 5'-end of 16S ribosomal RNA. The sequence is that of Small ribosomal subunit protein uS17 from Psychrobacter sp. (strain PRwf-1).